Reading from the N-terminus, the 465-residue chain is Mothers against decapentaplegic homolog 5 (465 aa).

Residues 13–137 form the MH1 domain; the sequence is PAVKRLLGWK…YKRVESPVLP (125 aa). Zn(2+) contacts are provided by Cys-65, Cys-110, Cys-122, and His-127. The tract at residues 163 to 242 is disordered; the sequence is NEPHMPHNAT…MGQDNSQSMD (80 aa). Polar residues predominate over residues 173–183; sequence FPDSFQQPNST. Low complexity predominate over residues 198–214; that stretch reads ASSTYPSSPASSGPSSP. Residues 271-465 enclose the MH2 domain; that stretch reads WCSIVYYELN…SPLNPISSVS (195 aa).

The protein belongs to the dwarfin/SMAD family. As to quaternary structure, may form trimers with the co-SMAD SMAD4.

It is found in the cytoplasm. It localises to the nucleus. In terms of biological role, transcriptional modulator activated by BMP (bone morphogenetic proteins) type 1 receptor kinase. SMAD5 is a receptor-regulated SMAD (R-SMAD). The polypeptide is Mothers against decapentaplegic homolog 5 (SMAD5) (Gallus gallus (Chicken)).